A 490-amino-acid chain; its full sequence is Flap endonuclease 1 (490 aa).

The segment at 1-106 (MGIKGLTKFL…DELTKRDERR (106 aa)) is N-domain. Aspartate 34 serves as a coordination point for Mg(2+). Positions 47 and 72 each coordinate DNA. Residues aspartate 88, glutamate 160, glutamate 162, aspartate 181, and aspartate 183 each contribute to the Mg(2+) site. The interval 124–266 (LIKKQSVRTI…STAYKLLKKY (143 aa)) is I-domain. Residue glutamate 160 coordinates DNA. DNA-binding residues include glycine 244 and aspartate 246. Mg(2+) is bound at residue aspartate 246. The tract at residues 351 to 359 (SQTCLDGFF) is interaction with PCNA. Disordered stretches follow at residues 364 to 396 (NERK…SLSC) and 421 to 490 (SSQA…SDED). Polar residues predominate over residues 430–442 (ENSSEAPNQSSEI). Positions 443–454 (KVNKIEENKDSE) are enriched in basic and acidic residues. Residues 455–469 (SSTVENTPSLQTKSP) are compositionally biased toward polar residues.

It belongs to the XPG/RAD2 endonuclease family. FEN1 subfamily. As to quaternary structure, interacts with PCNA. Three molecules of FEN1 bind to one PCNA trimer with each molecule binding to one PCNA monomer. PCNA stimulates the nuclease activity without altering cleavage specificity. Mg(2+) serves as cofactor. In terms of processing, phosphorylated. Phosphorylation upon DNA damage induces relocalization to the nuclear plasma.

The protein resides in the nucleus. It is found in the nucleolus. It localises to the nucleoplasm. Its subcellular location is the mitochondrion. Functionally, structure-specific nuclease with 5'-flap endonuclease and 5'-3' exonuclease activities involved in DNA replication and repair. During DNA replication, cleaves the 5'-overhanging flap structure that is generated by displacement synthesis when DNA polymerase encounters the 5'-end of a downstream Okazaki fragment. It enters the flap from the 5'-end and then tracks to cleave the flap base, leaving a nick for ligation. Also involved in the long patch base excision repair (LP-BER) pathway, by cleaving within the apurinic/apyrimidinic (AP) site-terminated flap. Acts as a genome stabilization factor that prevents flaps from equilibrating into structures that lead to duplications and deletions. Also possesses 5'-3' exonuclease activity on nicked or gapped double-stranded DNA, and exhibits RNase H activity. Also involved in replication and repair of rDNA and in repairing mitochondrial DNA. The chain is Flap endonuclease 1 from Cryptosporidium parvum (strain Iowa II).